Consider the following 424-residue polypeptide: Serine/threonine-protein kinase H1 (424 aa).

The N-myristoyl glycine moiety is linked to residue glycine 2. Cysteine 3 carries the S-palmitoyl cysteine lipid modification. Positions lysine 49 to alanine 81 are disordered. The span at glutamine 57–glutamate 72 shows a compositional bias: polar residues. Residues tyrosine 98–valine 355 enclose the Protein kinase domain. ATP is bound by residues isoleucine 104 to valine 112 and lysine 127. Residue aspartate 218 is the Proton acceptor of the active site. The segment at arginine 378–arginine 407 is disordered. Phosphoserine; by autocatalysis occurs at positions 380 and 381. The segment covering serine 385 to threonine 398 has biased composition (low complexity).

The protein belongs to the protein kinase superfamily. CAMK Ser/Thr protein kinase family. In terms of assembly, homodimer. Post-translationally, autophosphorylated on serine residues. In terms of processing, myristoylated. Required for membrane association. Prerequisite for palmitoylation to occur. Palmitoylated.

Its subcellular location is the golgi apparatus. The protein resides in the cytoplasm. The protein localises to the cytoskeleton. It localises to the microtubule organizing center. It is found in the centrosome. Its subcellular location is the nucleus speckle. The protein resides in the endoplasmic reticulum membrane. The protein localises to the cell membrane. The catalysed reaction is L-seryl-[protein] + ATP = O-phospho-L-seryl-[protein] + ADP + H(+). It catalyses the reaction L-threonyl-[protein] + ATP = O-phospho-L-threonyl-[protein] + ADP + H(+). Activity depends on Ca(2+) concentration. May be a SFC-associated serine kinase (splicing factor compartment-associated serine kinase) with a role in intranuclear SR protein (non-snRNP splicing factors containing a serine/arginine-rich domain) trafficking and pre-mRNA processing. The polypeptide is Serine/threonine-protein kinase H1 (PSKH1) (Bos taurus (Bovine)).